Consider the following 467-residue polypeptide: MRASWVESRRGQANVSQMHFARQGVVTEEMAYVAKRENLPESLVMEEVARGRMIIPANINHTGLEPMAIGIASKCKVNANIGASPNASDAAEEVNKLKLAVKYGADTVMDLSTGGVNLDEVRTAIIDASPVPIGTVPVYQALESVHGSIEKLDEDDFLHIIEKHCQQGVDYQTIHAGLLIEHLPKVKGRLTGIVSRGGGILAQWMLYHHRQNPLFTRFDDICEIFKRYDCTFSLGDSLRPGCQHDASDAAQLAELKTLGELTRRAWAHDVQVMVEGPGHVPLDQIEFNVKKQMEECSEAPFYVLGPLVTDIAPGYDHITSAIGAAMAGWHGTAMLCYVTPKEHLGLPNAEDVREGLIAYKIAAHAADIARHRPGARDRDDELSRARYNFDWNKQFELSLDPERAKEYHDETLPADIYKQAEFCSMCGPKHCPMQTKITDEDLEGLEKVLETKSGAADLAGVKMEKES.

Residues Asn80, Met109, Tyr139, His175, 195-197, 236-239, and Glu275 contribute to the substrate site; these read SRG and DSLR. His279 is a Zn(2+) binding site. Tyr302 is a substrate binding site. His343 is a Zn(2+) binding site. Residues Cys423, Cys426, and Cys431 each coordinate [4Fe-4S] cluster.

This sequence belongs to the ThiC family. It depends on [4Fe-4S] cluster as a cofactor.

It carries out the reaction 5-amino-1-(5-phospho-beta-D-ribosyl)imidazole + S-adenosyl-L-methionine = 4-amino-2-methyl-5-(phosphooxymethyl)pyrimidine + CO + 5'-deoxyadenosine + formate + L-methionine + 3 H(+). Its pathway is cofactor biosynthesis; thiamine diphosphate biosynthesis. Catalyzes the synthesis of the hydroxymethylpyrimidine phosphate (HMP-P) moiety of thiamine from aminoimidazole ribotide (AIR) in a radical S-adenosyl-L-methionine (SAM)-dependent reaction. This Synechococcus sp. (strain WH7803) protein is Phosphomethylpyrimidine synthase.